The primary structure comprises 527 residues: Protein PLASTID TRANSCRIPTIONALLY ACTIVE 12, chloroplastic (527 aa).

A chloroplast-targeting transit peptide spans 1-30 (MASISTTTWLYRGQVCTDSGKSSNCIVQRR). A PHYA-interacting region 1 (PIR1) region spans residues 1-115 (MASISTTTWL…ASIPGEDYWP (115 aa)). The disordered stretch occupies residues 89 to 188 (SYMDSTSGKL…NDSSDGFVTY (100 aa)). Residues 163–181 (TNDEVSDSEDSSEEEENDS) are compositionally biased toward acidic residues. Short sequence motifs (nuclear localization signal) lie at residues 204–211 (DKKLGRPH) and 235–242 (WRKPEKEQ). The segment at 252 to 352 (DVETVFLKAM…EMFSHQTDRE (101 aa)) is PHYA-interacting region 2 (PIR2). The span at 458–471 (GENDDDEDDADVEK) shows a compositional bias: acidic residues. The segment at 458-527 (GENDDDEDDA…LMDFEEETDP (70 aa)) is disordered. A compositionally biased stretch (basic and acidic residues) spans 485 to 504 (ETPELRTAKPKPKKEGRMSL). Positions 506–527 (EAVDDAENLTDFLMDFEEETDP) are enriched in acidic residues. Positions 512 to 520 (ENLTDFLMD) match the Required and sufficient for transcriptional transactivation activity and to trigger PIF proteins degradation motif.

Component of the transcriptionally active chromosome (TAC) complexes. Interacts with PTAC14 and PTAC7. Binds directly to PTAC6/PAP8 in the nucleus. Interacts with MED14. Binds to SL1/MTERF3. Binds to photoactivated phytochromes (e.g. PHYA and PHYB) via their photosensory domains; these interactions stimulate its light-mediated accumulation. Associates, via its N-terminal region, with phytochrome-interacting factors (PIFs) including PIF1, PIF3, PIF4, PIF5, PIF6, BHLH72/PIF7, UNE10/PIF8 and PIL1. Binds to RAD4. Associates with MRL7/RCB. As to expression, mostly expressed in cotyledons, leaves, stems and flowers, but barely in roots.

Its subcellular location is the plastid. The protein localises to the chloroplast. The protein resides in the nucleus. Its function is as follows. Involved in plastid gene expression. Acidic transcriptional coactivator necessary for the transactivation of many PIFs target genes (class B genes), particularly during the regulation of hypocotyl growth. Plays dual opposite roles in regulating hypocotyl growth, preventing it in red and far-red conditions, but promoting it otherwise. Required in the nucleus for the initiation of photomorphogenesis mediated by phytochromes (PHYs) (e.g. PHYA and PHYB) by mediating PHYs localization to photobodies, especially in response to red and far-red light, and implicating phytochrome nuclear bodies as sites of proteolysis for PHYs and PIFs proteins (e.g. PIF1 and PIF3). Acts downstream of PHYs and upstream of DET1. Involved in UV tolerance in both roots and hypocotyls, specifically in dark conditions. Element of a PIF4/HMR/MED14-dependent thermoresponsive process; acts as a PIF4 transcriptional coactivator to trigger the thermoresponsive growth-relevant genes (e.g. mainly involved in biosynthesis and signaling of the phytohormone auxin) and promote warm-temperature-dependent (e.g. 27 degrees Celsius) PIF4 and MED14 stabilization and accumulation, being more prominently involved in long days (LD) and continuous red light (Rc) than in short days (SD), thus modulating warm temperature elicitation of MED14-dependent thermomorphogenesis (e.g. hypocotyl elongation). The polypeptide is Protein PLASTID TRANSCRIPTIONALLY ACTIVE 12, chloroplastic (Arabidopsis thaliana (Mouse-ear cress)).